The sequence spans 192 residues: Putative manganese efflux pump MntP (192 aa).

Helical transmembrane passes span 3–23 (LIFT…AVSF), 38–58 (FILA…GWLL), 61–81 (GFAD…LFII), 101–121 (VFNF…ALAV), 130–150 (IVPL…SVGG), and 167–187 (ILGG…HLVW).

It belongs to the MntP (TC 9.B.29) family.

It localises to the cell membrane. Probably functions as a manganese efflux pump. The chain is Putative manganese efflux pump MntP from Methanospirillum hungatei JF-1 (strain ATCC 27890 / DSM 864 / NBRC 100397 / JF-1).